Reading from the N-terminus, the 215-residue chain is Cytochrome c biogenesis ATP-binding export protein CcmA (215 aa).

The region spanning 3–211 is the ABC transporter domain; that stretch reads LTAEILAARR…KMTGFAGVDN (209 aa). Residue 35-42 coordinates ATP; sequence GKNGSGKS.

This sequence belongs to the ABC transporter superfamily. CcmA exporter (TC 3.A.1.107) family. As to quaternary structure, the complex is composed of two ATP-binding proteins (CcmA) and two transmembrane proteins (CcmB).

Its subcellular location is the cell inner membrane. The enzyme catalyses heme b(in) + ATP + H2O = heme b(out) + ADP + phosphate + H(+). Part of the ABC transporter complex CcmAB involved in the biogenesis of c-type cytochromes; once thought to export heme, this seems not to be the case, but its exact role is uncertain. Responsible for energy coupling to the transport system. In Rhizobium johnstonii (strain DSM 114642 / LMG 32736 / 3841) (Rhizobium leguminosarum bv. viciae), this protein is Cytochrome c biogenesis ATP-binding export protein CcmA.